Reading from the N-terminus, the 183-residue chain is Nucleoside triphosphate pyrophosphatase (183 aa).

Catalysis depends on Asp71, which acts as the Proton acceptor.

This sequence belongs to the Maf family. A divalent metal cation serves as cofactor.

The protein localises to the cytoplasm. It carries out the reaction a ribonucleoside 5'-triphosphate + H2O = a ribonucleoside 5'-phosphate + diphosphate + H(+). The enzyme catalyses a 2'-deoxyribonucleoside 5'-triphosphate + H2O = a 2'-deoxyribonucleoside 5'-phosphate + diphosphate + H(+). Nucleoside triphosphate pyrophosphatase. May have a dual role in cell division arrest and in preventing the incorporation of modified nucleotides into cellular nucleic acids. The protein is Nucleoside triphosphate pyrophosphatase of Campylobacter jejuni subsp. doylei (strain ATCC BAA-1458 / RM4099 / 269.97).